The chain runs to 347 residues: NADH-ubiquinone oxidoreductase chain 2 (347 aa).

The next 10 helical transmembrane spans lie at 3-23, 25-45, 59-79, 96-116, 122-142, 149-169, 201-221, 239-259, 274-294, and 326-346; these read PMIF…VMMS, HWFM…PVLM, YFLT…INLM, MLIT…FWVP, IPLS…LSLL, INME…GWGG, SFLN…LLIF, IIAT…PLTG, NSTI…FFYI, and ILPL…FLML.

It belongs to the complex I subunit 2 family. As to quaternary structure, core subunit of respiratory chain NADH dehydrogenase (Complex I) which is composed of 45 different subunits. Interacts with TMEM242.

Its subcellular location is the mitochondrion inner membrane. The catalysed reaction is a ubiquinone + NADH + 5 H(+)(in) = a ubiquinol + NAD(+) + 4 H(+)(out). In terms of biological role, core subunit of the mitochondrial membrane respiratory chain NADH dehydrogenase (Complex I) that is believed to belong to the minimal assembly required for catalysis. Complex I functions in the transfer of electrons from NADH to the respiratory chain. The immediate electron acceptor for the enzyme is believed to be ubiquinone. This is NADH-ubiquinone oxidoreductase chain 2 from Crocidura hildegardeae (Hildegarde's shrew).